Here is a 293-residue protein sequence, read N- to C-terminus: Extracellular metalloprotease PODANS_2_14170 (293 aa).

A signal peptide spans Met-1–Ala-18. The N-linked (GlcNAc...) asparagine glycan is linked to Asn-60. His-206 contributes to the Zn(2+) binding site. The active site involves Glu-207. His-210 is a binding site for Zn(2+). Cysteines 242 and 269 form a disulfide.

The protein belongs to the peptidase M43B family.

Its subcellular location is the secreted. Functionally, secreted metalloproteinase that allows assimilation of proteinaceous substrates. In Podospora anserina (strain S / ATCC MYA-4624 / DSM 980 / FGSC 10383) (Pleurage anserina), this protein is Extracellular metalloprotease PODANS_2_14170.